The sequence spans 990 residues: Membrane alanyl aminopeptidase (990 aa).

An N-terminal signal peptide occupies residues 1–15 (FTIFLGVALLQGVLT). Residues 16-35 (LSPIPVPEEEWAEFSRMLRD) constitute a propeptide, activation peptide. N-linked (GlcNAc...) asparagine glycosylation is present at Asn295. 321–325 (GAMEN) is a substrate binding site. His357 contacts Zn(2+). Glu358 serves as the catalytic Proton acceptor. Zn(2+) is bound by residues His361 and Glu380. 3 N-linked (GlcNAc...) asparagine glycosylation sites follow: Asn609, Asn623, and Asn752. Gly968 carries the GPI-anchor amidated glycine lipid modification. The propeptide at 969–990 (SGNIAALSVVSLLVTLAINMVA) is removed in mature form.

This sequence belongs to the peptidase M1 family. Zn(2+) serves as cofactor. Midgut brush-border membrane.

It is found in the cell membrane. In terms of biological role, binds to the B.thuringiensis toxin, CryIA(C). The sequence is that of Membrane alanyl aminopeptidase from Manduca sexta (Tobacco hawkmoth).